Reading from the N-terminus, the 70-residue chain is uncharacterized protein (70 aa).

The helical transmembrane segment at 15–37 (IFAFLLFRLCKFCCVFCCALCNV) threads the bilayer.

Its subcellular location is the membrane. This is an uncharacterized protein from Dictyostelium discoideum (Social amoeba).